Reading from the N-terminus, the 1189-residue chain is Intraflagellar transport protein 122 homolog (1189 aa).

WD repeat units lie at residues 16–54 (KLEQ…MIQP), 57–97 (GHKD…LKYT), 99–135 (NDSI…VSKH), 137–175 (VSSK…KVKI), 180–223 (GALS…VGKD), 225–264 (VLGF…LGPI), 266–306 (EQNS…HGLY), and 459–498 (KQAT…LLFQ).

As to quaternary structure, component of the IFT complex A (IFT-A) complex.

Its subcellular location is the cell projection. It localises to the cilium. It is found in the cytoplasm. The protein localises to the cytoskeleton. The protein resides in the cilium basal body. In terms of biological role, required for cilia formation during embryonal development. Acts as a negative regulator of Shh signaling. In Xenopus tropicalis (Western clawed frog), this protein is Intraflagellar transport protein 122 homolog (ift122).